A 179-amino-acid polypeptide reads, in one-letter code: Large ribosomal subunit protein uL5 (179 aa).

Belongs to the universal ribosomal protein uL5 family. As to quaternary structure, part of the 50S ribosomal subunit; part of the 5S rRNA/L5/L18/L25 subcomplex. Contacts the 5S rRNA and the P site tRNA. Forms a bridge to the 30S subunit in the 70S ribosome.

Its function is as follows. This is one of the proteins that bind and probably mediate the attachment of the 5S RNA into the large ribosomal subunit, where it forms part of the central protuberance. In the 70S ribosome it contacts protein S13 of the 30S subunit (bridge B1b), connecting the 2 subunits; this bridge is implicated in subunit movement. Contacts the P site tRNA; the 5S rRNA and some of its associated proteins might help stabilize positioning of ribosome-bound tRNAs. This is Large ribosomal subunit protein uL5 from Yersinia enterocolitica serotype O:8 / biotype 1B (strain NCTC 13174 / 8081).